Here is a 224-residue protein sequence, read N- to C-terminus: Urease accessory protein UreF (224 aa).

Belongs to the UreF family. UreD, UreF and UreG form a complex that acts as a GTP-hydrolysis-dependent molecular chaperone, activating the urease apoprotein by helping to assemble the nickel containing metallocenter of UreC. The UreE protein probably delivers the nickel.

It is found in the cytoplasm. In terms of biological role, required for maturation of urease via the functional incorporation of the urease nickel metallocenter. The sequence is that of Urease accessory protein UreF from Pseudomonas putida (strain W619).